Here is a 144-residue protein sequence, read N- to C-terminus: Putative sugar phosphate isomerase RT0290 (144 aa).

Position 12 (histidine 12) interacts with substrate. The Proton donor role is filled by histidine 101. A substrate-binding site is contributed by arginine 135.

Belongs to the LacAB/RpiB family.

The protein is Putative sugar phosphate isomerase RT0290 of Rickettsia typhi (strain ATCC VR-144 / Wilmington).